We begin with the raw amino-acid sequence, 285 residues long: AT-hook motif nuclear-localized protein 21 (285 aa).

The tract at residues 17–95 (DGGGGGQFTT…GSKNKPKPPV (79 aa)) is disordered. Residues 39–50 (NHHHHHHNHNHH) show a composition bias toward basic residues. Residues 63–73 (GLGGGGGGGSG) are compositionally biased toward gly residues. The a.T hook DNA-binding region spans 78–90 (RRPRGRPAGSKNK). The PPC domain occupies 102 to 238 (ANTLRAHILE…EHEEHLQSGG (137 aa)).

In terms of tissue distribution, preferentially expressed in roots, but also in flowers and leaves. Detected in the inflorescence meristem, floral primordia and developing reproductive organs.

The protein localises to the nucleus. Its subcellular location is the nucleoplasm. Its function is as follows. Transcription factor that specifically binds AT-rich DNA sequences related to the nuclear matrix attachment regions (MARs). Binds to the MARs present in the ETTIN (ETT) promoter leading to a negative regulation of its gene expression. Functions as a molecular node downstream of the homeotic protein AGAMOUS (AG), regulating patterning and differentiation of reproductive organs. Acts as a chromatin remodeling factor that modifies the architecture of ETTIN (ETT) chromatin by modulating H3 methylation leading to the regulation of ETT expression. Seems to be involved in the regulation of a set of reproductives genes including CRABS CLAW (CRC), JAGGED (JAG) and KNUCKLES (KNU). The sequence is that of AT-hook motif nuclear-localized protein 21 from Arabidopsis thaliana (Mouse-ear cress).